Reading from the N-terminus, the 376-residue chain is N-acetyldiaminopimelate deacetylase (376 aa).

Asp69 is an active-site residue. Residue Glu128 is the Proton acceptor of the active site.

This sequence belongs to the peptidase M20A family. N-acetyldiaminopimelate deacetylase subfamily.

It catalyses the reaction N-acetyl-(2S,6S)-2,6-diaminopimelate + H2O = (2S,6S)-2,6-diaminopimelate + acetate. It functions in the pathway amino-acid biosynthesis; L-lysine biosynthesis via DAP pathway; LL-2,6-diaminopimelate from (S)-tetrahydrodipicolinate (acetylase route): step 3/3. In terms of biological role, catalyzes the conversion of N-acetyl-diaminopimelate to diaminopimelate and acetate. In Streptococcus uberis (strain ATCC BAA-854 / 0140J), this protein is N-acetyldiaminopimelate deacetylase.